A 486-amino-acid polypeptide reads, in one-letter code: ATP synthase subunit beta (486 aa).

Position 164-171 (164-171 (GGAGVGKT)) interacts with ATP.

Belongs to the ATPase alpha/beta chains family. F-type ATPases have 2 components, CF(1) - the catalytic core - and CF(0) - the membrane proton channel. CF(1) has five subunits: alpha(3), beta(3), gamma(1), delta(1), epsilon(1). CF(0) has four main subunits: a(1), b(1), b'(1) and c(9-12).

The protein resides in the cellular thylakoid membrane. The enzyme catalyses ATP + H2O + 4 H(+)(in) = ADP + phosphate + 5 H(+)(out). Produces ATP from ADP in the presence of a proton gradient across the membrane. The catalytic sites are hosted primarily by the beta subunits. This is ATP synthase subunit beta from Prochlorococcus marinus (strain MIT 9301).